The primary structure comprises 247 residues: ATP synthase subunit a, chloroplastic (247 aa).

5 helical membrane-spanning segments follow: residues 36–56 (GQVLMTSWFVFAVIAILSIAG), 95–115 (IPFLGTLFLFIFVSNWSGALI), 134–154 (INTTVALALLTSTAYFYAGFS), 199–219 (LVVGVLVALVPLVVPIPIMLL), and 220–240 (GLFTSGIQALVFATLAGAYIG).

Belongs to the ATPase A chain family. F-type ATPases have 2 components, CF(1) - the catalytic core - and CF(0) - the membrane proton channel. CF(1) has five subunits: alpha(3), beta(3), gamma(1), delta(1), epsilon(1). CF(0) has four main subunits: a, b, b' and c.

It localises to the plastid. It is found in the chloroplast thylakoid membrane. In terms of biological role, key component of the proton channel; it plays a direct role in the translocation of protons across the membrane. This is ATP synthase subunit a, chloroplastic from Tupiella akineta (Green alga).